The following is a 187-amino-acid chain: Elongation factor P (187 aa).

It belongs to the elongation factor P family.

Its subcellular location is the cytoplasm. The protein operates within protein biosynthesis; polypeptide chain elongation. Functionally, involved in peptide bond synthesis. Stimulates efficient translation and peptide-bond synthesis on native or reconstituted 70S ribosomes in vitro. Probably functions indirectly by altering the affinity of the ribosome for aminoacyl-tRNA, thus increasing their reactivity as acceptors for peptidyl transferase. The protein is Elongation factor P of Rhodospirillum rubrum (strain ATCC 11170 / ATH 1.1.1 / DSM 467 / LMG 4362 / NCIMB 8255 / S1).